Here is a 483-residue protein sequence, read N- to C-terminus: Glycogen synthase (483 aa).

Position 15 (Lys15) interacts with ADP-alpha-D-glucose.

This sequence belongs to the glycosyltransferase 1 family. Bacterial/plant glycogen synthase subfamily.

The enzyme catalyses [(1-&gt;4)-alpha-D-glucosyl](n) + ADP-alpha-D-glucose = [(1-&gt;4)-alpha-D-glucosyl](n+1) + ADP + H(+). It functions in the pathway glycan biosynthesis; glycogen biosynthesis. Synthesizes alpha-1,4-glucan chains using ADP-glucose. The protein is Glycogen synthase of Desulfatibacillum aliphaticivorans.